A 415-amino-acid chain; its full sequence is Serine hydroxymethyltransferase (415 aa).

(6S)-5,6,7,8-tetrahydrofolate contacts are provided by residues Leu121 and 125 to 127 (GHL). At Lys229 the chain carries N6-(pyridoxal phosphate)lysine. Position 352–354 (352–354 (SPF)) interacts with (6S)-5,6,7,8-tetrahydrofolate.

It belongs to the SHMT family. As to quaternary structure, homodimer. Pyridoxal 5'-phosphate is required as a cofactor.

Its subcellular location is the cytoplasm. It catalyses the reaction (6R)-5,10-methylene-5,6,7,8-tetrahydrofolate + glycine + H2O = (6S)-5,6,7,8-tetrahydrofolate + L-serine. The protein operates within one-carbon metabolism; tetrahydrofolate interconversion. It functions in the pathway amino-acid biosynthesis; glycine biosynthesis; glycine from L-serine: step 1/1. In terms of biological role, catalyzes the reversible interconversion of serine and glycine with tetrahydrofolate (THF) serving as the one-carbon carrier. This reaction serves as the major source of one-carbon groups required for the biosynthesis of purines, thymidylate, methionine, and other important biomolecules. Also exhibits THF-independent aldolase activity toward beta-hydroxyamino acids, producing glycine and aldehydes, via a retro-aldol mechanism. The polypeptide is Serine hydroxymethyltransferase (Methylobacillus flagellatus (strain ATCC 51484 / DSM 6875 / VKM B-1610 / KT)).